A 197-amino-acid polypeptide reads, in one-letter code: Dermorphin-1 (197 aa).

The first 20 residues, 1–20 (MSFLKKSLLLILFLGLVSLS), serve as a signal peptide directing secretion. Positions 21–45 (VCKEEKRETEEENENEENHEEGSEM) are excised as a propeptide. The segment at 24 to 197 (EEKRETEEEN…GYPSGEAKKM (174 aa)) is disordered. Over residues 30-39 (EEENENEENH) the composition is skewed to acidic residues. The segment covering 40-62 (EEGSEMKRYMFHLMDGEAKKRDS) has biased composition (basic and acidic residues). Met49 is subject to D-methionine. Asp54 is subject to Aspartic acid 1-amide. Positions 56-77 (EAKKRDSEENEIEENHEEGSEM) are excised as a propeptide. The residue at position 81 (Ala81) is a D-alanine (Ala). Ser86 bears the Serine amide mark. The span at 88–97 (EAKKIKRVSE) shows a compositional bias: basic and acidic residues. Residues 88-112 (EAKKIKRVSEEENENEENHEEGSEM) constitute a propeptide that is removed on maturation. Ala116 is modified (D-alanine (Ala)). Position 121 is a serine amide (Ser121). Residues 123–132 (EAKKIKRESE) show a composition bias toward basic and acidic residues. Residues 123–147 (EAKKIKRESEEEKEIEENHEEGSEM) constitute a propeptide that is removed on maturation. D-alanine (Ala) is present on Ala151. Ser156 is subject to Serine amide. The propeptide occupies 158–182 (EAKKIKRESEEENENEENHEEGSEM). Over residues 167-176 (EEENENEENH) the composition is skewed to acidic residues. Position 186 is a D-alanine (Ala) (Ala186). Ser191 is modified (serine amide). Residues 193–197 (EAKKM) constitute a propeptide that is removed on maturation.

This sequence belongs to the frog skin active peptide (FSAP) family. Dermorphin subfamily. In terms of tissue distribution, expressed by the skin glands.

The protein resides in the secreted. Functionally, dermorphin has a very potent opiate-like activity. It has high affinity and selectivity for mu-type opioid receptors. Its function is as follows. Deltorphin has a very potent opiate-like activity. It has high affinity and selectivity for delta-type opioid receptors. In Phyllomedusa sauvagei (Sauvage's leaf frog), this protein is Dermorphin-1.